Reading from the N-terminus, the 190-residue chain is Threonylcarbamoyl-AMP synthase (190 aa).

The YrdC-like domain maps to R8–A190.

This sequence belongs to the SUA5 family. TsaC subfamily.

It is found in the cytoplasm. It carries out the reaction L-threonine + hydrogencarbonate + ATP = L-threonylcarbamoyladenylate + diphosphate + H2O. Required for the formation of a threonylcarbamoyl group on adenosine at position 37 (t(6)A37) in tRNAs that read codons beginning with adenine. Catalyzes the conversion of L-threonine, HCO(3)(-)/CO(2) and ATP to give threonylcarbamoyl-AMP (TC-AMP) as the acyladenylate intermediate, with the release of diphosphate. The chain is Threonylcarbamoyl-AMP synthase from Alkalilimnicola ehrlichii (strain ATCC BAA-1101 / DSM 17681 / MLHE-1).